The following is a 218-amino-acid chain: Superoxide dismutase [Mn], mitochondrial (218 aa).

Histidine 27, histidine 84, aspartate 174, and histidine 178 together coordinate Mn(2+).

This sequence belongs to the iron/manganese superoxide dismutase family. As to quaternary structure, homotetramer. The cofactor is Mn(2+).

It is found in the mitochondrion matrix. The enzyme catalyses 2 superoxide + 2 H(+) = H2O2 + O2. Destroys superoxide anion radicals which are normally produced within the cells and which are toxic to biological systems. This Chlamydomonas reinhardtii (Chlamydomonas smithii) protein is Superoxide dismutase [Mn], mitochondrial (SODA).